Consider the following 372-residue polypeptide: MNPGIDLEQRFVETLMELGLTPGVAKTIWLPIPMLLMIIGATVGVLVSVWLERKISAAAQQRIGPEYIGPLGILAPVADGIKLVFKEDIVPANTDPWLFTLGPILVVIPVFFSYLIVPFGQNILITDLGIGIFFWIALSSIAPIGLLMAGYSSNNKYSLLGGLRAAAQSISYEIPLALAVLAVVMMSNSLSTIDIVNQQSGYGILGWNVIRQPIGFMLFWIAALAECERLPFDLPEAEEELVAGYQTEYAGMKFALFYLGSYVNLVLSSILVAVLYFGGWDLPIPATMIADWINVDPNNAIFELVTAGLGLVMTLLKAYFFLFLAILLRWTVPRVRIDQLLDFGWKFLLPVGLVNLLLTAGLKLAFPFAFGG.

A run of 9 helical transmembrane segments spans residues 27 to 47 (TIWLPIPMLLMIIGATVGVLV), 65 to 85 (PEYIGPLGILAPVADGIKLVF), 97 to 117 (WLFTLGPILVVIPVFFSYLIV), 128 to 148 (LGIGIFFWIALSSIAPIGLLM), 176 to 196 (LALAVLAVVMMSNSLSTIDIV), 204 to 224 (ILGWNVIRQPIGFMLFWIAAL), 249 to 269 (YAGMKFALFYLGSYVNLVLSS), 308 to 328 (GLGLVMTLLKAYFFLFLAILL), and 351 to 371 (VGLVNLLLTAGLKLAFPFAFG).

It belongs to the complex I subunit 1 family. In terms of assembly, NDH-1 is composed of at least 11 different subunits.

It is found in the cellular thylakoid membrane. The enzyme catalyses a plastoquinone + NADH + (n+1) H(+)(in) = a plastoquinol + NAD(+) + n H(+)(out). It carries out the reaction a plastoquinone + NADPH + (n+1) H(+)(in) = a plastoquinol + NADP(+) + n H(+)(out). NDH-1 shuttles electrons from an unknown electron donor, via FMN and iron-sulfur (Fe-S) centers, to quinones in the respiratory and/or the photosynthetic chain. The immediate electron acceptor for the enzyme in this species is believed to be plastoquinone. Couples the redox reaction to proton translocation, and thus conserves the redox energy in a proton gradient. The sequence is that of NAD(P)H-quinone oxidoreductase subunit 1 from Acaryochloris marina (strain MBIC 11017).